We begin with the raw amino-acid sequence, 305 residues long: Translation initiation factor eIF2B subunit alpha (305 aa).

The residue at position 35 (lysine 35) is an N6-acetyllysine.

The protein belongs to the eIF-2B alpha/beta/delta subunits family. As to quaternary structure, component of the translation initiation factor 2B (eIF2B) complex which is a heterodecamer of two sets of five different subunits: alpha, beta, gamma, delta and epsilon. Subunits alpha, beta and delta comprise a regulatory subcomplex and subunits epsilon and gamma comprise a catalytic subcomplex. Within the complex, the hexameric regulatory complex resides at the center, with the two heterodimeric catalytic subcomplexes bound on opposite sides.

It is found in the cytoplasm. The protein resides in the cytosol. Its activity is regulated as follows. Activated by the chemical integrated stress response (ISR) inhibitor ISRIB which stimulates guanine nucleotide exchange factor activity for both phosphorylated and unphosphorylated eIF2. Acts as a component of the translation initiation factor 2B (eIF2B) complex, which catalyzes the exchange of GDP for GTP on eukaryotic initiation factor 2 (eIF2) gamma subunit. Its guanine nucleotide exchange factor activity is repressed when bound to eIF2 complex phosphorylated on the alpha subunit, thereby limiting the amount of methionyl-initiator methionine tRNA available to the ribosome and consequently global translation is repressed. The chain is Translation initiation factor eIF2B subunit alpha (EIF2B1) from Pongo abelii (Sumatran orangutan).